A 153-amino-acid chain; its full sequence is Histone H2B.3 (153 aa).

Residues methionine 1–proline 28 are compositionally biased toward basic and acidic residues. Residues methionine 1–lysine 60 form a disordered region. N6-acetyllysine is present on residues lysine 7 and lysine 37. A Glycyl lysine isopeptide (Lys-Gly) (interchain with G-Cter in ubiquitin) cross-link involves residue lysine 149.

It belongs to the histone H2B family. As to quaternary structure, the nucleosome is a histone octamer containing two molecules each of H2A, H2B, H3 and H4 assembled in one H3-H4 heterotetramer and two H2A-H2B heterodimers. The octamer wraps approximately 147 bp of DNA. In terms of processing, can be acetylated to form H2BK6ac and H2BK33ac. Monoubiquitinated to form H2BK143ub1; may give a specific tag for epigenetic transcriptional activation.

It localises to the nucleus. Its subcellular location is the chromosome. In terms of biological role, core component of nucleosome. Nucleosomes wrap and compact DNA into chromatin, limiting DNA accessibility to the cellular machineries which require DNA as a template. Histones thereby play a central role in transcription regulation, DNA repair, DNA replication and chromosomal stability. DNA accessibility is regulated via a complex set of post-translational modifications of histones, also called histone code, and nucleosome remodeling. The sequence is that of Histone H2B.3 from Zea mays (Maize).